The chain runs to 355 residues: Uroporphyrinogen decarboxylase (355 aa).

Residues 38 to 42, Asp-87, Tyr-162, Ser-217, and His-331 each bind substrate; that span reads RQAGR.

The protein belongs to the uroporphyrinogen decarboxylase family. As to quaternary structure, homodimer.

The protein localises to the cytoplasm. The enzyme catalyses uroporphyrinogen III + 4 H(+) = coproporphyrinogen III + 4 CO2. It participates in porphyrin-containing compound metabolism; protoporphyrin-IX biosynthesis; coproporphyrinogen-III from 5-aminolevulinate: step 4/4. Its function is as follows. Catalyzes the decarboxylation of four acetate groups of uroporphyrinogen-III to yield coproporphyrinogen-III. The polypeptide is Uroporphyrinogen decarboxylase (Streptomyces avermitilis (strain ATCC 31267 / DSM 46492 / JCM 5070 / NBRC 14893 / NCIMB 12804 / NRRL 8165 / MA-4680)).